The sequence spans 385 residues: GPN-loop GTPase 1 (385 aa).

13 to 18 (GSGKTT) lines the GTP pocket. The Gly-Pro-Asn (GPN)-loop; involved in dimer interface motif lies at 70 to 72 (GPN). 173 to 176 (NKTD) lines the GTP pocket. Residues Ser304, Ser308, and Ser313 each carry the phosphoserine modification. The segment covering 317-332 (EDANDGLVDRDEDEGV) has biased composition (acidic residues). Residues 317–356 (EDANDGLVDRDEDEGVEREYTFPGEERTKGEVNENSAPDL) are disordered. The segment covering 333–348 (EREYTFPGEERTKGEV) has biased composition (basic and acidic residues). Ser352 is modified (phosphoserine). Lys369 participates in a covalent cross-link: Glycyl lysine isopeptide (Lys-Gly) (interchain with G-Cter in ubiquitin).

This sequence belongs to the GPN-loop GTPase family. As to quaternary structure, heterodimers with GPN2 or GPN3. Binds to RNA polymerase II (RNAPII) in a GTP-dependent manner. Interacts with nuclear pore protein NUP133 and nuclear export factor CRM1. Interacts with PCL1. In terms of processing, phosphorylated by the cyclin-CDK PCL1-PHO85.

It localises to the cytoplasm. Functionally, small GTPase required for proper nuclear import of RNA polymerase II (RNAPII). May act at an RNAP assembly step prior to nuclear import. Promotes sister chromatid separation during anaphase. The protein is GPN-loop GTPase 1 of Saccharomyces cerevisiae (strain ATCC 204508 / S288c) (Baker's yeast).